The sequence spans 421 residues: UDP-N-acetylglucosamine 1-carboxyvinyltransferase (421 aa).

22 to 23 (KN) serves as a coordination point for phosphoenolpyruvate. Arg92 lines the UDP-N-acetyl-alpha-D-glucosamine pocket. Residue Cys116 is the Proton donor of the active site. Cys116 is modified (2-(S-cysteinyl)pyruvic acid O-phosphothioketal). UDP-N-acetyl-alpha-D-glucosamine-binding positions include 121–125 (RPVDQ), Asp304, and Ile326.

Belongs to the EPSP synthase family. MurA subfamily.

Its subcellular location is the cytoplasm. It carries out the reaction phosphoenolpyruvate + UDP-N-acetyl-alpha-D-glucosamine = UDP-N-acetyl-3-O-(1-carboxyvinyl)-alpha-D-glucosamine + phosphate. The protein operates within cell wall biogenesis; peptidoglycan biosynthesis. Functionally, cell wall formation. Adds enolpyruvyl to UDP-N-acetylglucosamine. The polypeptide is UDP-N-acetylglucosamine 1-carboxyvinyltransferase (Bordetella avium (strain 197N)).